We begin with the raw amino-acid sequence, 360 residues long: Peptide chain release factor 1 (360 aa).

Gln235 is subject to N5-methylglutamine. The span at 285 to 295 (AQQASEASTRK) shows a compositional bias: polar residues. The tract at residues 285–305 (AQQASEASTRKSLIGSGDRSD) is disordered.

It belongs to the prokaryotic/mitochondrial release factor family. Methylated by PrmC. Methylation increases the termination efficiency of RF1.

The protein localises to the cytoplasm. In terms of biological role, peptide chain release factor 1 directs the termination of translation in response to the peptide chain termination codons UAG and UAA. This chain is Peptide chain release factor 1, found in Thiobacillus denitrificans (strain ATCC 25259 / T1).